Consider the following 60-residue polypeptide: Large ribosomal subunit protein uL30 (60 aa).

This sequence belongs to the universal ribosomal protein uL30 family. Part of the 50S ribosomal subunit.

This Flavobacterium psychrophilum (strain ATCC 49511 / DSM 21280 / CIP 103535 / JIP02/86) protein is Large ribosomal subunit protein uL30.